The primary structure comprises 170 residues: MEQQTRFRHLKMQIQRKLNACLQKSEQFFDRTFAVPTVSYEVRGIKAGVAYLQKNAIKFNRTLLLENPSEFVNQVVPHELAHLIVYQLFGRVKPHGKEWQAVMTNVFQLPAETYHQFDVKSVQGKTFAYRCGCRIHQLSVRRHNKIQRERAVYLCQYCKGRLEPVNKICP.

A SprT-like domain is found at 25-165; sequence SEQFFDRTFA…QYCKGRLEPV (141 aa). Residue His-78 participates in Zn(2+) binding. The active site involves Glu-79. His-82 serves as a coordination point for Zn(2+).

The protein belongs to the SprT family. The cofactor is Zn(2+).

It localises to the cytoplasm. In Actinobacillus succinogenes (strain ATCC 55618 / DSM 22257 / CCUG 43843 / 130Z), this protein is Protein SprT.